The primary structure comprises 209 residues: Peptidyl-tRNA hydrolase (209 aa).

Tyrosine 14 contributes to the tRNA binding site. The active-site Proton acceptor is the histidine 19. 3 residues coordinate tRNA: tyrosine 68, asparagine 70, and asparagine 116.

The protein belongs to the PTH family. Monomer.

It is found in the cytoplasm. The enzyme catalyses an N-acyl-L-alpha-aminoacyl-tRNA + H2O = an N-acyl-L-amino acid + a tRNA + H(+). In terms of biological role, hydrolyzes ribosome-free peptidyl-tRNAs (with 1 or more amino acids incorporated), which drop off the ribosome during protein synthesis, or as a result of ribosome stalling. Its function is as follows. Catalyzes the release of premature peptidyl moieties from peptidyl-tRNA molecules trapped in stalled 50S ribosomal subunits, and thus maintains levels of free tRNAs and 50S ribosomes. This chain is Peptidyl-tRNA hydrolase, found in Phenylobacterium zucineum (strain HLK1).